A 363-amino-acid chain; its full sequence is 3-isopropylmalate dehydrogenase (363 aa).

78 to 91 (GPKWEHLPPDQQPE) is an NAD(+) binding site. The substrate site is built by arginine 99, arginine 109, arginine 138, and aspartate 227. Aspartate 227, aspartate 251, and aspartate 255 together coordinate Mg(2+). 285-297 (GSAPDIAGKNIAN) contributes to the NAD(+) binding site.

Belongs to the isocitrate and isopropylmalate dehydrogenases family. LeuB type 1 subfamily. As to quaternary structure, homodimer. It depends on Mg(2+) as a cofactor. Mn(2+) is required as a cofactor.

It localises to the cytoplasm. It carries out the reaction (2R,3S)-3-isopropylmalate + NAD(+) = 4-methyl-2-oxopentanoate + CO2 + NADH. It participates in amino-acid biosynthesis; L-leucine biosynthesis; L-leucine from 3-methyl-2-oxobutanoate: step 3/4. Catalyzes the oxidation of 3-carboxy-2-hydroxy-4-methylpentanoate (3-isopropylmalate) to 3-carboxy-4-methyl-2-oxopentanoate. The product decarboxylates to 4-methyl-2 oxopentanoate. This is 3-isopropylmalate dehydrogenase from Shigella sonnei (strain Ss046).